Consider the following 363-residue polypeptide: Chorismate synthase (363 aa).

NADP(+) is bound by residues Arg48 and Arg54. Residues 125-127 (RSS), 237-238 (NA), Gly277, 292-296 (KPTSS), and Arg318 contribute to the FMN site.

Belongs to the chorismate synthase family. In terms of assembly, homotetramer. The cofactor is FMNH2.

The enzyme catalyses 5-O-(1-carboxyvinyl)-3-phosphoshikimate = chorismate + phosphate. Its pathway is metabolic intermediate biosynthesis; chorismate biosynthesis; chorismate from D-erythrose 4-phosphate and phosphoenolpyruvate: step 7/7. Functionally, catalyzes the anti-1,4-elimination of the C-3 phosphate and the C-6 proR hydrogen from 5-enolpyruvylshikimate-3-phosphate (EPSP) to yield chorismate, which is the branch point compound that serves as the starting substrate for the three terminal pathways of aromatic amino acid biosynthesis. This reaction introduces a second double bond into the aromatic ring system. The protein is Chorismate synthase of Pseudomonas putida (strain GB-1).